Reading from the N-terminus, the 333-residue chain is tRNA N6-adenosine threonylcarbamoyltransferase (333 aa).

Residues His-108 and His-112 each coordinate Fe cation. Residues Leu-129 to Gly-133, Asp-161, Glu-178, and Ser-258 each bind substrate. Fe cation is bound at residue Asp-286.

It belongs to the KAE1 / TsaD family. It depends on Fe(2+) as a cofactor.

It localises to the cytoplasm. It catalyses the reaction L-threonylcarbamoyladenylate + adenosine(37) in tRNA = N(6)-L-threonylcarbamoyladenosine(37) in tRNA + AMP + H(+). In terms of biological role, required for the formation of a threonylcarbamoyl group on adenosine at position 37 (t(6)A37) in tRNAs that read codons beginning with adenine. Is probably involved in the transfer of the threonylcarbamoyl moiety of threonylcarbamoyl-AMP (TC-AMP) to the N6 group of A37. The protein is tRNA N6-adenosine threonylcarbamoyltransferase of Pyrobaculum islandicum (strain DSM 4184 / JCM 9189 / GEO3).